The primary structure comprises 142 residues: Large ribosomal subunit protein uL13 (142 aa).

Belongs to the universal ribosomal protein uL13 family. Part of the 50S ribosomal subunit.

In terms of biological role, this protein is one of the early assembly proteins of the 50S ribosomal subunit, although it is not seen to bind rRNA by itself. It is important during the early stages of 50S assembly. The protein is Large ribosomal subunit protein uL13 of Trichlorobacter lovleyi (strain ATCC BAA-1151 / DSM 17278 / SZ) (Geobacter lovleyi).